The primary structure comprises 182 residues: D-lyxose ketol-isomerase (182 aa).

Positions 74, 76, 87, and 142 each coordinate Mn(2+).

It belongs to the D-lyxose ketol-isomerase family. Homodimer. It depends on Mn(2+) as a cofactor.

It carries out the reaction D-lyxose = D-xylulose. In terms of biological role, sugar isomerase that catalyzes the reversible isomerization of D-lyxose to D-xylulose. Shows weak activity with D-mannose and L-ribose. This is D-lyxose ketol-isomerase from Cohnella laeviribosi.